Reading from the N-terminus, the 105-residue chain is Malonate decarboxylase acyl carrier protein (105 aa).

S28 carries the post-translational modification O-(phosphoribosyl dephospho-coenzyme A)serine.

This sequence belongs to the MdcC family. In terms of processing, covalently binds the prosthetic group of malonate decarboxylase.

The protein resides in the cytoplasm. Its function is as follows. Subunit of malonate decarboxylase, it is an acyl carrier protein to which acetyl and malonyl thioester residues are bound via a 2'-(5''-phosphoribosyl)-3'-dephospho-CoA prosthetic group and turn over during the catalytic mechanism. This is Malonate decarboxylase acyl carrier protein from Xanthomonas euvesicatoria pv. vesicatoria (strain 85-10) (Xanthomonas campestris pv. vesicatoria).